Here is a 118-residue protein sequence, read N- to C-terminus: Large ribosomal subunit protein bL20 (118 aa).

It belongs to the bacterial ribosomal protein bL20 family.

Binds directly to 23S ribosomal RNA and is necessary for the in vitro assembly process of the 50S ribosomal subunit. It is not involved in the protein synthesizing functions of that subunit. In Thermus thermophilus (strain ATCC BAA-163 / DSM 7039 / HB27), this protein is Large ribosomal subunit protein bL20.